The chain runs to 202 residues: Small heat shock protein hspG5 (202 aa).

The sHSP domain maps to K31–N202. The disordered stretch occupies residues T96–N138.

Belongs to the small heat shock protein (HSP20) family.

This chain is Small heat shock protein hspG5 (hspG5), found in Dictyostelium discoideum (Social amoeba).